The primary structure comprises 339 residues: Annexin A2 (339 aa).

At S2 the chain carries N-acetylserine. The interval S2 to Y24 is S100A10-binding site. A Phosphotyrosine; by SRC modification is found at Y24. T26 carries the phosphothreonine; by PKC modification. 4 Annexin repeats span residues F33–K104, T105–K176, E189–Q261, and N265–G336.

Belongs to the annexin family. In terms of assembly, heterotetramer containing 2 light chains of S100A10/p11 and 2 heavy chains of ANXA2/p36.

The protein localises to the secreted. The protein resides in the extracellular space. Its subcellular location is the extracellular matrix. It localises to the basement membrane. In terms of biological role, calcium-regulated membrane-binding protein whose affinity for calcium is greatly enhanced by anionic phospholipids. It binds two calcium ions with high affinity. The polypeptide is Annexin A2 (ANXA2) (Gallus gallus (Chicken)).